The sequence spans 108 residues: Putative pterin-4-alpha-carbinolamine dehydratase (108 aa).

Belongs to the pterin-4-alpha-carbinolamine dehydratase family.

It carries out the reaction (4aS,6R)-4a-hydroxy-L-erythro-5,6,7,8-tetrahydrobiopterin = (6R)-L-erythro-6,7-dihydrobiopterin + H2O. This chain is Putative pterin-4-alpha-carbinolamine dehydratase, found in Bordetella avium (strain 197N).